Here is a 111-residue protein sequence, read N- to C-terminus: uncharacterized protein (111 aa).

Residues 60–80 traverse the membrane as a helical segment; the sequence is TFGRFLAHISCLICILSKRIF.

Its subcellular location is the mitochondrion membrane. This is an uncharacterized protein from Arabidopsis thaliana (Mouse-ear cress).